The primary structure comprises 333 residues: Biotin synthase (333 aa).

Residues 46–275 (YYGKKVKLNM…TKEIRISGGR (230 aa)) form the Radical SAM core domain. Positions 64, 68, and 71 each coordinate [4Fe-4S] cluster. [2Fe-2S] cluster contacts are provided by Cys-108, Cys-140, Cys-200, and Arg-270.

It belongs to the radical SAM superfamily. Biotin synthase family. As to quaternary structure, homodimer. It depends on [4Fe-4S] cluster as a cofactor. [2Fe-2S] cluster is required as a cofactor.

The enzyme catalyses (4R,5S)-dethiobiotin + (sulfur carrier)-SH + 2 reduced [2Fe-2S]-[ferredoxin] + 2 S-adenosyl-L-methionine = (sulfur carrier)-H + biotin + 2 5'-deoxyadenosine + 2 L-methionine + 2 oxidized [2Fe-2S]-[ferredoxin]. It participates in cofactor biosynthesis; biotin biosynthesis; biotin from 7,8-diaminononanoate: step 2/2. Catalyzes the conversion of dethiobiotin (DTB) to biotin by the insertion of a sulfur atom into dethiobiotin via a radical-based mechanism. This chain is Biotin synthase, found in Halalkalibacterium halodurans (strain ATCC BAA-125 / DSM 18197 / FERM 7344 / JCM 9153 / C-125) (Bacillus halodurans).